The chain runs to 439 residues: 3-phosphoshikimate 1-carboxyvinyltransferase (439 aa).

3-phosphoshikimate-binding residues include Lys-31, Ser-32, and Arg-36. Lys-31 is a binding site for phosphoenolpyruvate. Gly-103 and Arg-131 together coordinate phosphoenolpyruvate. 3-phosphoshikimate is bound by residues Ser-175, Gln-177, Asp-322, and Lys-349. Gln-177 contributes to the phosphoenolpyruvate binding site. Catalysis depends on Asp-322, which acts as the Proton acceptor. The phosphoenolpyruvate site is built by Arg-353 and Arg-397.

It belongs to the EPSP synthase family. In terms of assembly, monomer.

The protein resides in the cytoplasm. It carries out the reaction 3-phosphoshikimate + phosphoenolpyruvate = 5-O-(1-carboxyvinyl)-3-phosphoshikimate + phosphate. The protein operates within metabolic intermediate biosynthesis; chorismate biosynthesis; chorismate from D-erythrose 4-phosphate and phosphoenolpyruvate: step 6/7. Functionally, catalyzes the transfer of the enolpyruvyl moiety of phosphoenolpyruvate (PEP) to the 5-hydroxyl of shikimate-3-phosphate (S3P) to produce enolpyruvyl shikimate-3-phosphate and inorganic phosphate. This chain is 3-phosphoshikimate 1-carboxyvinyltransferase, found in Clostridium tetani (strain Massachusetts / E88).